We begin with the raw amino-acid sequence, 199 residues long: Probable thymidylate kinase (199 aa).

An ATP-binding site is contributed by 13–20; it reads GIDGAGKT.

It belongs to the thymidylate kinase family.

The catalysed reaction is dTMP + ATP = dTDP + ADP. In Staphylothermus marinus (strain ATCC 43588 / DSM 3639 / JCM 9404 / F1), this protein is Probable thymidylate kinase.